The sequence spans 134 residues: Sec-independent protein translocase protein TatB (134 aa).

A helical membrane pass occupies residues 2–22 (FDGIGFMELLLIGILGLVVLG). The tract at residues 90-134 (AESVNRPYKVEDTSPVAPKASPDESPSVVEAKSSEATSENSSTPK) is disordered. Positions 123-134 (SEATSENSSTPK) are enriched in polar residues.

This sequence belongs to the TatB family. In terms of assembly, the Tat system comprises two distinct complexes: a TatABC complex, containing multiple copies of TatA, TatB and TatC subunits, and a separate TatA complex, containing only TatA subunits. Substrates initially bind to the TatABC complex, which probably triggers association of the separate TatA complex to form the active translocon.

It is found in the cell inner membrane. In terms of biological role, part of the twin-arginine translocation (Tat) system that transports large folded proteins containing a characteristic twin-arginine motif in their signal peptide across membranes. Together with TatC, TatB is part of a receptor directly interacting with Tat signal peptides. TatB may form an oligomeric binding site that transiently accommodates folded Tat precursor proteins before their translocation. This is Sec-independent protein translocase protein TatB from Shewanella frigidimarina (strain NCIMB 400).